Consider the following 309-residue polypeptide: Protein FdhE homolog (309 aa).

Belongs to the FdhE family.

Its subcellular location is the cytoplasm. In terms of biological role, necessary for formate dehydrogenase activity. This is Protein FdhE homolog from Pectobacterium atrosepticum (strain SCRI 1043 / ATCC BAA-672) (Erwinia carotovora subsp. atroseptica).